The chain runs to 85 residues: Large ribosomal subunit protein bL31B (85 aa).

This sequence belongs to the bacterial ribosomal protein bL31 family. Type B subfamily. As to quaternary structure, part of the 50S ribosomal subunit.

The protein is Large ribosomal subunit protein bL31B of Clavibacter sepedonicus (Clavibacter michiganensis subsp. sepedonicus).